The primary structure comprises 492 residues: Probable cytochrome P450 513A3 (492 aa).

A helical transmembrane segment spans residues 1–21 (MTSLTLYLIIFSIILYLFVNR). Cysteine 437 lines the heme pocket.

This sequence belongs to the cytochrome P450 family. Heme is required as a cofactor.

It localises to the membrane. This is Probable cytochrome P450 513A3 (cyp513A3) from Dictyostelium discoideum (Social amoeba).